A 460-amino-acid chain; its full sequence is tRNA hydroxylation protein P (460 aa).

This sequence belongs to the peptidase U32 family.

Functionally, involved in prephenate-dependent formation of 5-hydroxyuridine (ho5U) modification at position 34 in tRNAs, the first step in 5-carboxymethoxyuridine (cmo5U) biosynthesis. In Haemophilus influenzae (strain ATCC 51907 / DSM 11121 / KW20 / Rd), this protein is tRNA hydroxylation protein P.